Here is a 220-residue protein sequence, read N- to C-terminus: Large ribosomal subunit protein bL25 (220 aa).

Over residues 186–199 (ELEDEDEDEDEVAA) the composition is skewed to acidic residues. The disordered stretch occupies residues 186–220 (ELEDEDEDEDEVAADEVPATEVDDQAAVKEGEGKE). Residues 211–220 (AAVKEGEGKE) show a composition bias toward basic and acidic residues.

Belongs to the bacterial ribosomal protein bL25 family. CTC subfamily. Part of the 50S ribosomal subunit; part of the 5S rRNA/L5/L18/L25 subcomplex. Contacts the 5S rRNA. Binds to the 5S rRNA independently of L5 and L18.

This is one of the proteins that binds to the 5S RNA in the ribosome where it forms part of the central protuberance. This Christiangramia forsetii (strain DSM 17595 / CGMCC 1.15422 / KT0803) (Gramella forsetii) protein is Large ribosomal subunit protein bL25.